Reading from the N-terminus, the 486-residue chain is Malonate-semialdehyde dehydrogenase 2 (486 aa).

Residues phenylalanine 154, lysine 178, glutamate 181, arginine 182, and serine 231 each coordinate NAD(+). The Nucleophile role is filled by cysteine 286. Glutamate 385 contacts NAD(+).

Belongs to the aldehyde dehydrogenase family. IolA subfamily. Homotetramer.

The catalysed reaction is 3-oxopropanoate + NAD(+) + CoA + H2O = hydrogencarbonate + acetyl-CoA + NADH + H(+). It catalyses the reaction 2-methyl-3-oxopropanoate + NAD(+) + CoA + H2O = propanoyl-CoA + hydrogencarbonate + NADH + H(+). It participates in polyol metabolism; myo-inositol degradation into acetyl-CoA; acetyl-CoA from myo-inositol: step 7/7. Functionally, catalyzes the oxidation of malonate semialdehyde (MSA) and methylmalonate semialdehyde (MMSA) into acetyl-CoA and propanoyl-CoA, respectively. Is involved in a myo-inositol catabolic pathway. Bicarbonate, and not CO2, is the end-product of the enzymatic reaction. The protein is Malonate-semialdehyde dehydrogenase 2 of Shouchella clausii (strain KSM-K16) (Alkalihalobacillus clausii).